The following is a 416-amino-acid chain: Thyroid hormone receptor alpha (416 aa).

Residues 1–13 (MEPMSNKQDSNSS) are compositionally biased toward polar residues. Residues 1–37 (MEPMSNKQDSNSSEGDEKGWPDVPKRKRKNSQCSMKS) form a disordered region. The segment at 1 to 58 (MEPMSNKQDSNSSEGDEKGWPDVPKRKRKNSQCSMKSMSALSVSVPGYIPSYLEKDEP) is modulating. Residues 15-24 (GDEKGWPDVP) are compositionally biased toward basic and acidic residues. Positions 59, 62, 76, 79, 97, 103, 113, and 116 each coordinate Zn(2+). 2 NR C4-type zinc fingers span residues 59 to 79 (CVVC…CEGC) and 97 to 121 (CKYE…FKKC). The segment at residues 59–133 (CVVCGDKATG…VGMAMDLVLD (75 aa)) is a DNA-binding region (nuclear receptor). In terms of domain architecture, NR LBD spans 169–413 (AEWELIRMAT…PPLFLEVFED (245 aa)). Arginine 234 is a binding site for 3,3',5-triiodo-L-thyronine.

Belongs to the nuclear hormone receptor family. NR1 subfamily.

The protein localises to the nucleus. Functionally, nuclear hormone receptor that can act as a repressor or activator of transcription. High affinity receptor for thyroid hormones, including triiodothyronine and thyroxine. The protein is Thyroid hormone receptor alpha (thra) of Hippoglossus hippoglossus (Atlantic halibut).